The following is a 328-amino-acid chain: 4-hydroxythreonine-4-phosphate dehydrogenase (328 aa).

2 residues coordinate substrate: His-130 and Thr-131. A divalent metal cation-binding residues include His-163, His-208, and His-263. Substrate-binding residues include Lys-271, Asn-280, and Arg-289.

This sequence belongs to the PdxA family. Homodimer. Zn(2+) is required as a cofactor. Requires Mg(2+) as cofactor. The cofactor is Co(2+).

It is found in the cytoplasm. The enzyme catalyses 4-(phosphooxy)-L-threonine + NAD(+) = 3-amino-2-oxopropyl phosphate + CO2 + NADH. Its pathway is cofactor biosynthesis; pyridoxine 5'-phosphate biosynthesis; pyridoxine 5'-phosphate from D-erythrose 4-phosphate: step 4/5. Its function is as follows. Catalyzes the NAD(P)-dependent oxidation of 4-(phosphooxy)-L-threonine (HTP) into 2-amino-3-oxo-4-(phosphooxy)butyric acid which spontaneously decarboxylates to form 3-amino-2-oxopropyl phosphate (AHAP). This is 4-hydroxythreonine-4-phosphate dehydrogenase from Burkholderia vietnamiensis (strain G4 / LMG 22486) (Burkholderia cepacia (strain R1808)).